The following is a 128-amino-acid chain: CD59 glycoprotein (128 aa).

The first 25 residues, 1–25 (MGIQGGSVLFGLLLVLAVFCHSGHS), serve as a signal peptide directing secretion. Positions 26-108 (LQCYNCPNPT…QLENGGTSLS (83 aa)) constitute a UPAR/Ly6 domain. Intrachain disulfides connect Cys28–Cys51, Cys31–Cys38, and Cys44–Cys64. A glycan (N-linked (GlcNAc...) asparagine) is linked at Asn43. Lys66 is a glycosylation site (N-linked (Glc) (glycation) lysine). 2 disulfide bridges follow: Cys70–Cys88 and Cys89–Cys94. O-linked (GalNAc...) threonine glycans are attached at residues Thr76 and Thr77. The GPI-anchor amidated asparagine moiety is linked to residue Asn102. Positions 103–128 (GGTSLSEKTVLLLVTPFLAAAWSLHP) are cleaved as a propeptide — removed in mature form.

In terms of assembly, interacts with T-cell surface antigen CD2. In terms of processing, N- and O-glycosylated. The N-glycosylation mainly consists of a family of biantennary complex-type structures with and without lactosamine extensions and outer arm fucose residues. Also significant amounts of triantennary complexes (22%). Variable sialylation also present in the Asn-43 oligosaccharide. The predominant O-glycans are mono-sialylated forms of the disaccharide, Gal-beta-1,3GalNAc, and their sites of attachment are probably on Thr-76 and Thr-77. The GPI-anchor of soluble urinary CD59 has no inositol-associated phospholipid, but is composed of seven different GPI-anchor variants of one or more monosaccharide units. Major variants contain sialic acid, mannose and glucosamine. Sialic acid linked to an N-acetylhexosamine-galactose arm is present in two variants. Post-translationally, glycated. Glycation is found in diabetic subjects, but only at minimal levels in nondiabetic subjects. Glycated CD59 lacks MAC-inhibitory function and confers to vascular complications of diabetes.

It is found in the cell membrane. Its subcellular location is the secreted. In terms of biological role, potent inhibitor of the complement membrane attack complex (MAC) action, which protects human cells from damage during complement activation. Acts by binding to the beta-haipins of C8 (C8A and C8B) components of the assembling MAC, forming an intermolecular beta-sheet that prevents incorporation of the multiple copies of C9 required for complete formation of the osmolytic pore. The soluble form from urine retains its specific complement binding activity, but exhibits greatly reduced ability to inhibit complement membrane attack complex (MAC) assembly on cell membranes. This Homo sapiens (Human) protein is CD59 glycoprotein.